Consider the following 222-residue polypeptide: Putative N-acetylmannosamine-6-phosphate 2-epimerase (222 aa).

This sequence belongs to the NanE family.

It carries out the reaction an N-acyl-D-glucosamine 6-phosphate = an N-acyl-D-mannosamine 6-phosphate. The protein operates within amino-sugar metabolism; N-acetylneuraminate degradation; D-fructose 6-phosphate from N-acetylneuraminate: step 3/5. Converts N-acetylmannosamine-6-phosphate (ManNAc-6-P) to N-acetylglucosamine-6-phosphate (GlcNAc-6-P). The polypeptide is Putative N-acetylmannosamine-6-phosphate 2-epimerase (Staphylococcus aureus (strain bovine RF122 / ET3-1)).